The following is a 533-amino-acid chain: Cytochrome P450 9e2 (533 aa).

Residue Cys475 coordinates heme.

Belongs to the cytochrome P450 family. Heme serves as cofactor.

The protein resides in the endoplasmic reticulum membrane. It localises to the microsome membrane. In Blattella germanica (German cockroach), this protein is Cytochrome P450 9e2 (CYP9E2).